The sequence spans 212 residues: External core antigen (212 aa).

Residues 1 to 19 (MQLFHLCLVISCSCPTVQA) form the signal peptide. The HBEAG stretch occupies residues 25–27 (GWL). The interval 165 to 212 (NAPILSTLPETTVVRRRGRSPRRRTPSPRRRRSQSPRRRRSQSRESQC) is disordered. Over residues 178 to 205 (VRRRGRSPRRRTPSPRRRRSQSPRRRRS) the composition is skewed to basic residues. A 1; half-length repeat occupies 184 to 190 (SPRRRTP). The interval 184–206 (SPRRRTPSPRRRRSQSPRRRRSQ) is 3 X 8 AA repeats of S-P-R-R-R-R-S-Q. The propeptide occupies 184–212 (SPRRRTPSPRRRRSQSPRRRRSQSRESQC). Tandem repeats lie at residues 191 to 198 (SPRRRRSQ) and 199 to 206 (SPRRRRSQ).

Belongs to the orthohepadnavirus precore antigen family. In terms of assembly, homodimerizes. In terms of processing, phosphorylated. Post-translationally, cleaved by host furin.

It localises to the secreted. It is found in the host nucleus. Functionally, may regulate immune response to the intracellular capsid in acting as a T-cell tolerogen, by having an immunoregulatory effect which prevents destruction of infected cells by cytotoxic T-cells. This immune regulation may predispose to chronicity during perinatal infections and prevent severe liver injury during adult infections. This is External core antigen from Hepatitis B virus genotype B1 subtype adw (isolate Japan/pJDW233/1988) (HBV-B).